The primary structure comprises 352 residues: MIRKAIARVVERQDLSEAEMIEVMDQVMSGGATPAQIASFITALRMKGETVDEITGAARVMRDRALPIRVGKSVLGIDRDDINLDRETILDTCGTGGSGTNSFNISTTVAFIVSACGVKVAKHGNRAVSSSCGSADVLEALGVNLDVTPDVVERSIAQIGIGFLFAPALHGAMKHAIGPRREIGIRTIFNILGPLTNPAGADCQVLGVYREDLVEKLAQVLKKLGCRSGFVVHGCDGMDEITLTGESTVAEITADGVKLYKVTPEQFGLERAPLAELHGGDALGNAVIVRDILSGKDGAKRRIVLLNAGYALVATGKAKDVAEGIRLAAETIDSGAAMKQLERLVALTNEAE.

Residues Gly94, 97-98 (GS), Ser102, 104-107 (NIST), 122-130 (KHGNRAVSS), and Ser134 each bind 5-phospho-alpha-D-ribose 1-diphosphate. Gly94 contributes to the anthranilate binding site. Ser106 contributes to the Mg(2+) binding site. An anthranilate-binding site is contributed by Asn125. Arg180 contacts anthranilate. Residues Asp239 and Glu240 each coordinate Mg(2+).

This sequence belongs to the anthranilate phosphoribosyltransferase family. As to quaternary structure, homodimer. It depends on Mg(2+) as a cofactor.

It carries out the reaction N-(5-phospho-beta-D-ribosyl)anthranilate + diphosphate = 5-phospho-alpha-D-ribose 1-diphosphate + anthranilate. It participates in amino-acid biosynthesis; L-tryptophan biosynthesis; L-tryptophan from chorismate: step 2/5. Catalyzes the transfer of the phosphoribosyl group of 5-phosphorylribose-1-pyrophosphate (PRPP) to anthranilate to yield N-(5'-phosphoribosyl)-anthranilate (PRA). This is Anthranilate phosphoribosyltransferase from Citrifermentans bemidjiense (strain ATCC BAA-1014 / DSM 16622 / JCM 12645 / Bem) (Geobacter bemidjiensis).